The primary structure comprises 388 residues: Diacylglycerol O-acyltransferase 2 (388 aa).

The Cytoplasmic segment spans residues 1-69; sequence MKTLIAAYSG…NRSKVEKQLQ (69 aa). Residues 16 to 40 are disordered; the sequence is RQAEADRSQRSHGGPALSREGSGRW. Residues 70–88 form a helical membrane-spanning segment; that stretch reads VISVLQWVLSFLVLGVACS. At 89–92 the chain is on the lumenal side; that stretch reads AILM. The helical transmembrane segment at 93–112 threads the bilayer; that stretch reads YIFCTDCWLIAVLYFTWLVF. Residues 113–388 are Cytoplasmic-facing; sequence DWNTPKKGGR…LPETEVLEVN (276 aa).

Belongs to the diacylglycerol acyltransferase family. Forms multimeric complexes consisting of several DGAT2 subunits. Interacts with SLC27A1 and this interaction is enhanced in the presence of ZFYVE1. As to expression, predominantly expressed in liver and white adipose tissue. Expressed at lower level in mammary gland, testis and peripheral blood leukocytes. Expressed in sebaceous glands of normal skin but decreased psoriatic skin.

The protein resides in the endoplasmic reticulum membrane. Its subcellular location is the lipid droplet. It is found in the cytoplasm. It localises to the perinuclear region. The catalysed reaction is an acyl-CoA + a 1,2-diacyl-sn-glycerol = a triacyl-sn-glycerol + CoA. It carries out the reaction all-trans-retinol + an acyl-CoA = an all-trans-retinyl ester + CoA. It catalyses the reaction 2-(9Z-octadecenoyl)-glycerol + (9Z)-octadecenoyl-CoA = 1,2-di-(9Z-octadecenoyl)-sn-glycerol + CoA. The enzyme catalyses 1,2-di-(9Z-octadecenoyl)-sn-glycerol + (9Z)-octadecenoyl-CoA = 1,2,3-tri-(9Z-octadecenoyl)-glycerol + CoA. The catalysed reaction is all-trans-retinol + hexadecanoyl-CoA = all-trans-retinyl hexadecanoate + CoA. It carries out the reaction 1-O-(9Z-octadecenyl)-glycerol + (9Z)-octadecenoyl-CoA = 1-O-(9Z-octadecyl)-3-(9Z-octadecenoyl)-glycerol + CoA. It catalyses the reaction 1-(9Z-octadecenoyl)-glycerol + (9Z)-octadecenoyl-CoA = 1,2-di-(9Z-octadecenoyl)-glycerol + CoA. The enzyme catalyses 1,2-di-(9Z-octadecenoyl)-sn-glycerol + hexadecanoyl-CoA = 1,2-di-(9Z)-octadecenoyl-3-hexadecanoyl-sn-glycerol + CoA. The catalysed reaction is 1,3-di-(9Z-octadecenoyl)-glycerol + (9Z)-octadecenoyl-CoA = 1,2,3-tri-(9Z-octadecenoyl)-glycerol + CoA. It carries out the reaction 2,3-di-(9Z)-octadecenoyl-sn-glycerol + (9Z)-octadecenoyl-CoA = 1,2,3-tri-(9Z-octadecenoyl)-glycerol + CoA. It catalyses the reaction 2-(9Z-octadecenoyl)-glycerol + hexadecanoyl-CoA = 1-hexadecanoyl-2-(9Z-octadecenoyl)-sn-glycerol + CoA. It participates in glycerolipid metabolism; triacylglycerol biosynthesis. Inhibited by niacin. Essential acyltransferase that catalyzes the terminal and only committed step in triacylglycerol synthesis by using diacylglycerol and fatty acyl CoA as substrates. Required for synthesis and storage of intracellular triglycerides. Probably plays a central role in cytosolic lipid accumulation. In liver, is primarily responsible for incorporating endogenously synthesized fatty acids into triglycerides. Also functions as an acyl-CoA retinol acyltransferase (ARAT). Also able to use 1-monoalkylglycerol (1-MAkG) as an acyl acceptor for the synthesis of monoalkyl-monoacylglycerol (MAMAG). The sequence is that of Diacylglycerol O-acyltransferase 2 from Homo sapiens (Human).